The following is a 620-amino-acid chain: Endoglucanase 21 (620 aa).

The interval methionine 1–proline 39 is disordered. The Cytoplasmic portion of the chain corresponds to methionine 1–lysine 70. Over residues aspartate 21–proline 39 the composition is skewed to basic and acidic residues. A helical; Signal-anchor for type II membrane protein membrane pass occupies residues isoleucine 71–leucine 91. Residues isoleucine 92–proline 620 lie on the Extracellular side of the membrane. Asparagine 108 and asparagine 134 each carry an N-linked (GlcNAc...) asparagine glycan. Catalysis depends on aspartate 166, which acts as the Nucleophile. Asparagine 217, asparagine 325, asparagine 346, asparagine 409, asparagine 426, and asparagine 482 each carry an N-linked (GlcNAc...) asparagine glycan. Catalysis depends on residues histidine 514 and aspartate 561. A glycan (N-linked (GlcNAc...) asparagine) is linked at asparagine 567. Residue glutamate 570 is part of the active site.

The protein belongs to the glycosyl hydrolase 9 (cellulase E) family. As to expression, expressed in conductive tissues of young roots, cotyledons, rosette leaves, cauline leaves and sepals. Expressed in the leaf trichome support cells.

It is found in the cell membrane. The enzyme catalyses Endohydrolysis of (1-&gt;4)-beta-D-glucosidic linkages in cellulose, lichenin and cereal beta-D-glucans.. The polypeptide is Endoglucanase 21 (KOR3) (Arabidopsis thaliana (Mouse-ear cress)).